Here is a 562-residue protein sequence, read N- to C-terminus: DNA-binding protein MutS2 (562 aa).

ATP is bound at residue 380 to 387 (GANSGGKT).

The protein belongs to the DNA mismatch repair MutS family. Archaeal Muts2 subfamily. Multimer. The cofactor is Co(2+). Mn(2+) is required as a cofactor.

In terms of biological role, has ATPase and non-specific DNA-binding activities. May be involved in recombination and/or recombinational repair. Not involved in mismatch repair. In Pyrococcus furiosus (strain ATCC 43587 / DSM 3638 / JCM 8422 / Vc1), this protein is DNA-binding protein MutS2.